The chain runs to 390 residues: Tuftelin (390 aa).

Coiled coils occupy residues 88–126 (DKMTHEKNIDQLKSEVQYIQEARNCLQKLREDISSKLDR) and 163–352 (PSMS…EKQV). The disordered stretch occupies residues 356–383 (NFSTQARAKTENLGSVRISKPPSPKPMP).

Belongs to the tuftelin family. Interacts with TFIP11. May form oligomers. As to expression, ameloblasts, and also non-odontogenic tissues including kidney, lung, liver and testis.

The protein localises to the secreted. Involved in the structural organization of the epidermis. Involved in the mineralization and structural organization of enamel. This Mus musculus (Mouse) protein is Tuftelin (Tuft1).